The chain runs to 138 residues: MSETSEQDARNLAAQHRELQQNAESVNQQLGMVQMSIEDCTRAILTLEELKSASGAINTMIPLGAGALIHANIADVDKIVVSVGAGISVEKTPTEAIETLTQRKEELGKVVERLNGTLTQIGQRLASIESAVGNRPPQ.

This sequence belongs to the prefoldin subunit alpha family. In terms of assembly, heterohexamer of two alpha and four beta subunits.

It is found in the cytoplasm. In terms of biological role, molecular chaperone capable of stabilizing a range of proteins. Seems to fulfill an ATP-independent, HSP70-like function in archaeal de novo protein folding. The sequence is that of Prefoldin subunit alpha from Methanococcoides burtonii (strain DSM 6242 / NBRC 107633 / OCM 468 / ACE-M).